The primary structure comprises 117 residues: Acylphosphatase (117 aa).

Positions 21–107 (RWRFRIRGLV…TGADWFEIRP (87 aa)) constitute an Acylphosphatase-like domain. Active-site residues include Arg36 and Asn54.

The protein belongs to the acylphosphatase family.

The catalysed reaction is an acyl phosphate + H2O = a carboxylate + phosphate + H(+). This chain is Acylphosphatase (acyP), found in Synechococcus sp. (strain RCC307).